The following is an 813-amino-acid chain: MFGTPSRRTFLTASALSAMALAASPTVTDAIAAPGPDSWSALCERWIDIITGRRAARTSDPRARAIIAKTDRKVAEILTDLVSGSSRQTVLISADLRKEQSPFITKTARAIESMACAWATPGSSYHKDPEILSACIEGLRDFCRLRYNPSQDEYGNWWDWEDGASRAVADVMCILHDVLPPEVMSAAAAGIDHFIPDPWFQQPASVKPTANPVQPVVSTGANRMDLTRAVMCRSIATGDEKRLRHAVDGLPDAWRVTTEGDGFRADGGFIQHSHIPYTGGYGDVLFSGLAMLFPLVSGMRFDIVESARKAFHDQVERGFIPVMYNGQILDDVRGRSISRINESAAMHGISIARAMLMMADALPTHRAEQWRGIVHGWMARNTFDHLSEPSTLVDISLFDAAAKARPVPESSTPSYFASMDRLVHRTADWLITVSNCSDRIAWYEYGNGENEWASRTSQGMRYLLLPGDMGQYEDGYWATVDYSAPTGTTVDSTPLKRAVGASWAAKTPTNEWSGGLASGSWSAAASHITSQDSALKARRLWVGLKDAMVELTTDVTTDASRAITVVEHRKVASSSTKLLVDGNRVSSATSFQNPRWAHLDGVGGYVFATDTDLSADVATRKGTWIDVNPSRKVKGADEVIERAYASLHVTHHDRPVAWALLPTASRSHTMALATRPGVEPFTVLRNDATVQAVRSAGALLTKDPTVVTTLAFWKPATCGGVAVNRPALVQTRESANQMEVVIVEPTQKRGSLTVTIEGSWKVKTADSHVDVSCENAAGTLHVDTAGLGGQSVRVTLARQVTQTPSGGGRHDRA.

The tat-type signal signal peptide spans 1 to 32; sequence MFGTPSRRTFLTASALSAMALAASPTVTDAIA. Active-site residues include N222, H272, and Y281.

This sequence belongs to the polysaccharide lyase 8 family. In terms of processing, predicted to be exported by the Tat system. The position of the signal peptide cleavage has not been experimentally proven.

The protein localises to the secreted. The enzyme catalyses [hyaluronan](n) = n 3-(4-deoxy-beta-D-gluc-4-enuronosyl)-N-acetyl-D-glucosamine + H2O. Functionally, degrades hyaluronic acid (HA) exclusively into HA disaccharides (HA-2). Produced HA-2s confer anti-inflammatory properties leading to reduced immunopathology in the mouse model of acne. The protein is Hyaluronate lyase HylB of Cutibacterium acnes (strain DSM 16379 / KPA171202) (Propionibacterium acnes).